The chain runs to 258 residues: uncharacterized protein (258 aa).

N60, N104, and N113 each carry an N-linked (GlcNAc...) asparagine; by host glycan. Positions 147–156 (TTRKPGQKTT) are enriched in low complexity. Residues 147 to 183 (TTRKPGQKTTLSRLKTTPNKHTQHKRSTRRTSPRDYN) are disordered. Residues 157 to 166 (LSRLKTTPNK) show a composition bias toward polar residues. Over residues 167 to 177 (HTQHKRSTRRT) the composition is skewed to basic residues. Residue N183 is glycosylated (N-linked (GlcNAc...) asparagine; by host). Residues 208 to 228 (AHSAWILIVIIIIIVVILFFF) form a helical membrane-spanning segment.

The protein belongs to the RL11 family.

The protein resides in the membrane. This is an uncharacterized protein from Human cytomegalovirus (strain AD169) (HHV-5).